The following is a 500-amino-acid chain: Na(+)/H(+) antiporter NhaB (500 aa).

The next 11 membrane-spanning stretches (helical) occupy residues 23-43 (VVIC…GPVA), 53-73 (IFTL…LLLI), 96-116 (VILL…LLLF), 129-149 (AILA…LDAL), 150-170 (TVTA…HRVA), 205-225 (LLMH…VGEP), 238-258 (FVDF…AGLV), 311-331 (ILII…LMVI), 350-370 (FQDA…VAVI), 450-470 (ATPN…APLI), and 477-497 (MVWM…WAVT).

Belongs to the NhaB Na(+)/H(+) (TC 2.A.34) antiporter family.

It is found in the cell inner membrane. It catalyses the reaction 2 Na(+)(in) + 3 H(+)(out) = 2 Na(+)(out) + 3 H(+)(in). Na(+)/H(+) antiporter that extrudes sodium in exchange for external protons. The protein is Na(+)/H(+) antiporter NhaB of Pseudomonas putida (strain ATCC 47054 / DSM 6125 / CFBP 8728 / NCIMB 11950 / KT2440).